We begin with the raw amino-acid sequence, 152 residues long: Flagellar assembly factor FliW (152 aa).

Belongs to the FliW family. Interacts with translational regulator CsrA and flagellin(s).

It is found in the cytoplasm. Acts as an anti-CsrA protein, binds CsrA and prevents it from repressing translation of its target genes, one of which is flagellin. Binds to flagellin and participates in the assembly of the flagellum. The chain is Flagellar assembly factor FliW from Caldicellulosiruptor bescii (strain ATCC BAA-1888 / DSM 6725 / KCTC 15123 / Z-1320) (Anaerocellum thermophilum).